Consider the following 358-residue polypeptide: DNA replication and repair protein RecF (358 aa).

30–37 (GANGSGKT) contributes to the ATP binding site.

It belongs to the RecF family.

It localises to the cytoplasm. The RecF protein is involved in DNA metabolism; it is required for DNA replication and normal SOS inducibility. RecF binds preferentially to single-stranded, linear DNA. It also seems to bind ATP. This Acinetobacter baylyi (strain ATCC 33305 / BD413 / ADP1) protein is DNA replication and repair protein RecF.